The following is an 853-amino-acid chain: Deubiquitinase otu (853 aa).

A disordered region spans residues 1-20; it reads MDMQVQRPITSGSRQAPDPY. The 122-residue stretch at 29-150 folds into the OTU domain; sequence LYRKHTARDA…ENHFDSVYDV (122 aa). Asp37 is an active-site residue. Catalysis depends on Ser40, which acts as the Nucleophile. Residue His143 is part of the active site. Residues 336–396 form the Tudor domain; that stretch reads NFKVGAKCKV…HPLPPDEYRP (61 aa). The segment at 396–853 is LC domain; sequence PWSLPFRYHR…AAVYAATRHH (458 aa). The span at 460 to 470 shows a compositional bias: basic and acidic residues; sequence QDDEQRDHNDP. Disordered regions lie at residues 460-531, 681-704, 732-794, and 817-853; these read QDDE…YVPM, AVES…LEKS, GPAA…AAQG, and NMDP…TRHH. The segment covering 499-517 has biased composition (low complexity); that stretch reads SRVQPQNSSSSQNQEVSGS. Polar residues predominate over residues 747 to 758; sequence NGSQFSFYTTPS. Residues 769 to 778 show a composition bias toward pro residues; that stretch reads LLQPPPPPPI. Low complexity-rich tracts occupy residues 783-794 and 820-838; these read AGPPQLGGAAQG and PSAQ…APLS.

As to quaternary structure, self aggregates, forming amyloid-like fibrillar helical structures; protein aggregation is mediated by the C-terminal LC domain, is enhanced by RNA binding and is essential for deubiquitinase activity. Interacts (via OTU domain) with bam (via C-terminus); the interaction enhances otu aggregation and deubiquitinase activity. Together with bam interacts with CycA/cyclin-A; the interaction stabilizes CycA by promoting its deubiquitination. Together with bam interacts with Traf6. Interacts with Hrb27C; the interaction is RNA-independent. Associates (via N-terminus) with mRNP complexes; the interaction is weak. Expressed at high levels in the ovary, at low levels in the brain and fat body, and at moderate levels in the gut.

The protein localises to the cytoplasm. The protein resides in the cell cortex. It is found in the perinuclear region. Activated by protein aggregation, which is mediated by the LC domain and enhanced by RNA binding. Catalytic component of a deubiquitinase complex consisting of bam and otu. The complex deubiquitinates K63-linked polyubiquitinated proteins; this antagonizes the ubiquitination activity of Traf6 and regulates the IMD immune signaling pathway. Otu-bam deubiquitinase activity is regulated by Traf6 dependent immune signaling regulation of bam expression levels; this forms a feedback loop that regulates the IMD immune signaling pathway and balances gut immune activity during aging. The complex deubiquitinates and stabilizes CycA/cyclin-A to regulate CycA-dependent differentiation. Involved in grk mRNA localization to the dorsal anterior region of the oocyte required for dorsal-ventral axis determination; may function as a ribonuclear protein complex together with sqd and Hrb27C. May regulate actin cytoskeleton organization in differentiating cystocytes during fusome maturation; required for efficient nurse cell cytoplasmic dumping during oogenesis. Essential for female fertility; involved in germ cell proliferation and germ cell differentiation. Functionally, involved in the early stages of germ cell proliferation and differentiation during oogenesis. Required for polytene chromosome dispersal in nurse cells during oogenesis. Its function is as follows. Involved in the later stages of germ cell proliferation and differentiation during oogenesis. This is Deubiquitinase otu from Drosophila melanogaster (Fruit fly).